The primary structure comprises 101 residues: Small ribosomal subunit protein uS14 (101 aa).

It belongs to the universal ribosomal protein uS14 family. Part of the 30S ribosomal subunit. Contacts proteins S3 and S10.

Its function is as follows. Binds 16S rRNA, required for the assembly of 30S particles and may also be responsible for determining the conformation of the 16S rRNA at the A site. The chain is Small ribosomal subunit protein uS14 from Xylella fastidiosa (strain 9a5c).